We begin with the raw amino-acid sequence, 368 residues long: Biotin synthase (368 aa).

The Radical SAM core domain maps to Val46–Arg277. Cys64, Cys68, and Cys71 together coordinate [4Fe-4S] cluster. [2Fe-2S] cluster contacts are provided by Ser109, Cys142, and Cys202. A disordered region spans residues Arg347–Ala368.

It belongs to the radical SAM superfamily. Biotin synthase family. Homodimer. [4Fe-4S] cluster serves as cofactor. The cofactor is [2Fe-2S] cluster.

It catalyses the reaction (4R,5S)-dethiobiotin + (sulfur carrier)-SH + 2 reduced [2Fe-2S]-[ferredoxin] + 2 S-adenosyl-L-methionine = (sulfur carrier)-H + biotin + 2 5'-deoxyadenosine + 2 L-methionine + 2 oxidized [2Fe-2S]-[ferredoxin]. Its pathway is cofactor biosynthesis; biotin biosynthesis; biotin from 7,8-diaminononanoate: step 2/2. In terms of biological role, catalyzes the conversion of dethiobiotin (DTB) to biotin by the insertion of a sulfur atom into dethiobiotin via a radical-based mechanism. This Anaeromyxobacter sp. (strain Fw109-5) protein is Biotin synthase.